Reading from the N-terminus, the 343-residue chain is Putative outer membrane protein y4fJ (343 aa).

The signal sequence occupies residues 1 to 17; that stretch reads MRMNFSTVLLGSSVALA.

The protein belongs to the alphaproteobacteria porin family.

The protein localises to the cell outer membrane. Functionally, may act as an outer membrane pore. This is Putative outer membrane protein y4fJ from Sinorhizobium fredii (strain NBRC 101917 / NGR234).